Consider the following 355-residue polypeptide: UDP-N-acetylglucosamine--N-acetylmuramyl-(pentapeptide) pyrophosphoryl-undecaprenol N-acetylglucosamine transferase (355 aa).

UDP-N-acetyl-alpha-D-glucosamine is bound by residues 14–16 (TGG), asparagine 126, arginine 162, serine 190, isoleucine 243, 262–267 (ALTVSE), and glutamine 287.

Belongs to the glycosyltransferase 28 family. MurG subfamily.

It is found in the cell inner membrane. It carries out the reaction di-trans,octa-cis-undecaprenyl diphospho-N-acetyl-alpha-D-muramoyl-L-alanyl-D-glutamyl-meso-2,6-diaminopimeloyl-D-alanyl-D-alanine + UDP-N-acetyl-alpha-D-glucosamine = di-trans,octa-cis-undecaprenyl diphospho-[N-acetyl-alpha-D-glucosaminyl-(1-&gt;4)]-N-acetyl-alpha-D-muramoyl-L-alanyl-D-glutamyl-meso-2,6-diaminopimeloyl-D-alanyl-D-alanine + UDP + H(+). It functions in the pathway cell wall biogenesis; peptidoglycan biosynthesis. Functionally, cell wall formation. Catalyzes the transfer of a GlcNAc subunit on undecaprenyl-pyrophosphoryl-MurNAc-pentapeptide (lipid intermediate I) to form undecaprenyl-pyrophosphoryl-MurNAc-(pentapeptide)GlcNAc (lipid intermediate II). The sequence is that of UDP-N-acetylglucosamine--N-acetylmuramyl-(pentapeptide) pyrophosphoryl-undecaprenol N-acetylglucosamine transferase from Vibrio parahaemolyticus serotype O3:K6 (strain RIMD 2210633).